A 449-amino-acid chain; its full sequence is Trigger factor (449 aa).

The PPIase FKBP-type domain maps to 172–257; sequence GDRVTVDFVG…LKQVEWAHLP (86 aa).

The protein belongs to the FKBP-type PPIase family. Tig subfamily.

The protein resides in the cytoplasm. It catalyses the reaction [protein]-peptidylproline (omega=180) = [protein]-peptidylproline (omega=0). Involved in protein export. Acts as a chaperone by maintaining the newly synthesized protein in an open conformation. Functions as a peptidyl-prolyl cis-trans isomerase. The chain is Trigger factor from Ralstonia nicotianae (strain ATCC BAA-1114 / GMI1000) (Ralstonia solanacearum).